Reading from the N-terminus, the 365-residue chain is Putative carbonic anhydrase-like protein 1 (365 aa).

The signal sequence occupies residues 1–25 (MRFECSHFPLFLIILTCHISPLKSS). Residues 28–356 (YQWSYDSDVF…TNNRLVRTNI (329 aa)) form the Alpha-carbonic anhydrase domain. Y223 is a catalytic residue. Substrate contacts are provided by residues T295 and 295–296 (TS).

It belongs to the alpha-carbonic anhydrase family.

The protein localises to the secreted. This chain is Putative carbonic anhydrase-like protein 1 (cah-1), found in Caenorhabditis elegans.